A 239-amino-acid chain; its full sequence is 2-C-methyl-D-erythritol 4-phosphate cytidylyltransferase (239 aa).

It belongs to the IspD/TarI cytidylyltransferase family. IspD subfamily. As to quaternary structure, homodimer.

It carries out the reaction 2-C-methyl-D-erythritol 4-phosphate + CTP + H(+) = 4-CDP-2-C-methyl-D-erythritol + diphosphate. The protein operates within isoprenoid biosynthesis; isopentenyl diphosphate biosynthesis via DXP pathway; isopentenyl diphosphate from 1-deoxy-D-xylulose 5-phosphate: step 2/6. In terms of biological role, catalyzes the formation of 4-diphosphocytidyl-2-C-methyl-D-erythritol from CTP and 2-C-methyl-D-erythritol 4-phosphate (MEP). The polypeptide is 2-C-methyl-D-erythritol 4-phosphate cytidylyltransferase (Sodalis glossinidius (strain morsitans)).